The sequence spans 703 residues: Putative glycosyl hydrolase ecdE (703 aa).

The N-terminal stretch at 1–21 (MKLNIFASAILLCTSAFPVAA) is a signal peptide. The active site involves Asp-47. Residues Asn-104, Asn-120, Asn-293, Asn-397, Asn-443, and Asn-641 are each glycosylated (N-linked (GlcNAc...) asparagine).

Belongs to the glycosyl hydrolase 32 family.

The sequence is that of Putative glycosyl hydrolase ecdE from Aspergillus rugulosus (Emericella rugulosa).